Reading from the N-terminus, the 539-residue chain is Monocarboxylate transporter 8 (539 aa).

The segment at 1–92 (MALQSQASEE…VETRGTARGF (92 aa)) is disordered. Residue Ala-2 is modified to N-acetylalanine. The Cytoplasmic segment spans residues 2–96 (ALQSQASEEA…GTARGFQPPE (95 aa)). Residues 31-41 (PESEPEPEPEP) are compositionally biased toward acidic residues. Pro residues predominate over residues 42–64 (EPVPVPPPEPQPEPQPLPDPAPL). The chain crosses the membrane as a helical span at residues 97-117 (GGFGWVVVFAATWCNGSIFGI). At 118–143 (HNSVGILYSMLLEEEKEKNRQVEFQA) the chain is on the extracellular side. A helical transmembrane segment spans residues 144 to 164 (AWVGALAMGMIFFCSPIVSIF). The Cytoplasmic segment spans residues 165–171 (TDRLGCR). A helical membrane pass occupies residues 172–192 (ITATAGAAVAFIGLHTSSFTS). Over 193 to 200 (SLSLRYFT) the chain is Extracellular. A helical membrane pass occupies residues 201–221 (YGILFGCGCSFAFQPSLVILG). Residues 222–229 (HYFQRRLG) lie on the Cytoplasmic side of the membrane. The chain crosses the membrane as a helical span at residues 230–250 (LANGVVSAGSSIFSMSFPFLI). Residues 251 to 258 (RMLGDKIK) are Extracellular-facing. Residues 259-279 (LAQTFQVLSTFMFVLMLLSLT) traverse the membrane as a helical segment. Residues 280–322 (YRPLLPSSQDTPSKRGVRTLHQRFLAQLRKYFNMRVFRQRTYR) are Cytoplasmic-facing. A helical membrane pass occupies residues 323-343 (IWAFGIAAAALGYFVPYVHLM). Residues 344 to 356 (KYVEEEFSEIKET) lie on the Extracellular side of the membrane. The helical transmembrane segment at 357 to 377 (WVLLVCIGATSGLGRLVSGHI) threads the bilayer. At 378–386 (SDSIPGLKK) the chain is on the cytoplasmic side. The helical transmembrane segment at 387-407 (IYLQVLSFLLLGLMSMMIPLC) threads the bilayer. Over 408-409 (RD) the chain is Extracellular. The chain crosses the membrane as a helical span at residues 410-430 (FGGLIVVCLFLGLCDGFFITI). At 431 to 447 (MAPIAFELVGPMQASQA) the chain is on the cytoplasmic side. The helical transmembrane segment at 448 to 468 (IGYLLGMMALPMIAGPPIAGL) threads the bilayer. Residues 469–477 (LRNCFGDYH) are Extracellular-facing. Residues 478–498 (VAFYFAGVPPIIGAVILFFVP) traverse the membrane as a helical segment. At 499–539 (LMHQRMFKKEQRDSSKDKMLAPDPDPNGELLPGSPNPEEPI) the chain is on the cytoplasmic side. Basic and acidic residues predominate over residues 508–518 (EQRDSSKDKML). Residues 508–539 (EQRDSSKDKMLAPDPDPNGELLPGSPNPEEPI) are disordered.

It belongs to the major facilitator superfamily. Monocarboxylate porter (TC 2.A.1.13) family. As to quaternary structure, monomer. Homodimer. Homooligomer. Highly expressed in liver and heart. In adult brain tissue expression is largely confined to endothelial cells of the blood-brain barrier (at protein level).

The protein resides in the cell membrane. Its subcellular location is the apical cell membrane. The enzyme catalyses 3,3',5-triiodo-L-thyronine(out) = 3,3',5-triiodo-L-thyronine(in). It catalyses the reaction L-thyroxine(out) = L-thyroxine(in). It carries out the reaction 3,3',5'-triiodo-L-thyronine(out) = 3,3',5'-triiodo-L-thyronine(in). The catalysed reaction is 3,3'-diiodo-L-thyronine(out) = 3,3'-diiodo-L-thyronine(in). Its function is as follows. Specific thyroid hormone transmembrane transporter, that mediates both uptake and efflux of thyroid hormones across the cell membrane independently of pH or a Na(+) gradient. Major substrates are the iodothyronines T3 and T4 and to a lesser extent rT3 and 3,3-diiodothyronine (3,3'-T2). Acts as an important mediator of thyroid hormone transport, especially T3, through the blood-brain barrier. The chain is Monocarboxylate transporter 8 (SLC16A2) from Homo sapiens (Human).